The sequence spans 364 residues: 3-dehydroquinate synthase (364 aa).

NAD(+)-binding positions include Asp71–Lys76, Gly105–Asp109, Thr129–Thr130, Lys142, Lys151, and Cys169–Thr172. Zn(2+)-binding residues include Glu184, His247, and His264.

The protein belongs to the sugar phosphate cyclases superfamily. Dehydroquinate synthase family. Co(2+) is required as a cofactor. Requires Zn(2+) as cofactor. The cofactor is NAD(+).

It is found in the cytoplasm. It catalyses the reaction 7-phospho-2-dehydro-3-deoxy-D-arabino-heptonate = 3-dehydroquinate + phosphate. It functions in the pathway metabolic intermediate biosynthesis; chorismate biosynthesis; chorismate from D-erythrose 4-phosphate and phosphoenolpyruvate: step 2/7. Catalyzes the conversion of 3-deoxy-D-arabino-heptulosonate 7-phosphate (DAHP) to dehydroquinate (DHQ). The polypeptide is 3-dehydroquinate synthase (Klebsiella pneumoniae (strain 342)).